Here is a 232-residue protein sequence, read N- to C-terminus: DnaJ homolog subfamily B member 8 (232 aa).

Residues 3-69 (NYYEVLGVQA…KKRSLYDRAG (67 aa)) form the J domain.

In terms of assembly, interacts with histone deacetylases HDAC4, HDAC6, and SIRT2, HDAC activity is required for antiaggregation.

Its function is as follows. Efficient suppressor of aggregation and toxicity of disease-associated polyglutamine proteins. This is DnaJ homolog subfamily B member 8 (DNAJB8) from Homo sapiens (Human).